Here is a 505-residue protein sequence, read N- to C-terminus: L-carnitine/gamma-butyrobetaine antiporter (505 aa).

Helical transmembrane passes span 10-30 (IEPK…WLTV), 51-71 (WGWA…WLVF), 92-112 (IFMM…SIEI), 143-163 (GPLP…FFFV), 195-215 (FYLV…TPLV), 231-251 (LDAI…ACGL), 263-283 (SYLS…SFIM), 316-336 (WTVF…IFLA), 347-367 (LCFG…TVLG), 403-423 (LSTA…VTLI), 446-466 (LLVR…LLAL), and 475-495 (AIIA…LSFI).

The protein belongs to the BCCT transporter (TC 2.A.15) family. CaiT subfamily. In terms of assembly, homotrimer.

The protein resides in the cell inner membrane. The catalysed reaction is 4-(trimethylamino)butanoate(in) + (R)-carnitine(out) = 4-(trimethylamino)butanoate(out) + (R)-carnitine(in). It participates in amine and polyamine metabolism; carnitine metabolism. Functionally, catalyzes the exchange of L-carnitine for gamma-butyrobetaine. The chain is L-carnitine/gamma-butyrobetaine antiporter from Salmonella typhi.